The following is a 223-amino-acid chain: 7-cyano-7-deazaguanine synthase (223 aa).

12 to 22 (FSGGQDSTTCL) is an ATP binding site. Zn(2+) contacts are provided by cysteine 189, cysteine 198, cysteine 201, and cysteine 204.

This sequence belongs to the QueC family. Homodimer. It depends on Zn(2+) as a cofactor.

It carries out the reaction 7-carboxy-7-deazaguanine + NH4(+) + ATP = 7-cyano-7-deazaguanine + ADP + phosphate + H2O + H(+). Its pathway is purine metabolism; 7-cyano-7-deazaguanine biosynthesis. Catalyzes the ATP-dependent conversion of 7-carboxy-7-deazaguanine (CDG) to 7-cyano-7-deazaguanine (preQ(0)). In Halalkalibacterium halodurans (strain ATCC BAA-125 / DSM 18197 / FERM 7344 / JCM 9153 / C-125) (Bacillus halodurans), this protein is 7-cyano-7-deazaguanine synthase.